The primary structure comprises 214 residues: tRNA (guanine-N(7)-)-methyltransferase (214 aa).

Residues aspartate 35, glutamate 60, asparagine 87, and aspartate 113 each coordinate S-adenosyl-L-methionine. The active site involves aspartate 113. The substrate site is built by lysine 117 and aspartate 149.

The protein belongs to the class I-like SAM-binding methyltransferase superfamily. TrmB family.

It carries out the reaction guanosine(46) in tRNA + S-adenosyl-L-methionine = N(7)-methylguanosine(46) in tRNA + S-adenosyl-L-homocysteine. The protein operates within tRNA modification; N(7)-methylguanine-tRNA biosynthesis. In terms of biological role, catalyzes the formation of N(7)-methylguanine at position 46 (m7G46) in tRNA. The polypeptide is tRNA (guanine-N(7)-)-methyltransferase (Prochlorococcus marinus (strain NATL2A)).